The sequence spans 191 residues: MKYIQTEQQIEVPEGVTVSIKSRIVKVVGPRGTLTKNLKHIDVTFTKVNNQLIKVAVHNGGRKHVAALRTVKSLVDNMITGVTKGYKYKMRYVYAHFPINVNIVEKDGAKFIEVRNFLGDKKIRNVPVRDGVTIEFSTNVKDEIVLSGNSVEDVSQNAADLQQICRVRNKDIRKFLDGIYVSHKGFITEDL.

Belongs to the universal ribosomal protein uL6 family. Component of the large ribosomal subunit (LSU). Mature yeast ribosomes consist of a small (40S) and a large (60S) subunit. The 40S small subunit contains 1 molecule of ribosomal RNA (18S rRNA) and 33 different proteins (encoded by 57 genes). The large 60S subunit contains 3 rRNA molecules (25S, 5.8S and 5S rRNA) and 46 different proteins (encoded by 81 genes). uL6 lines the binding pocket for eukaryotic elongation factor 2 (eEF2).

The protein resides in the cytoplasm. Component of the ribosome, a large ribonucleoprotein complex responsible for the synthesis of proteins in the cell. The small ribosomal subunit (SSU) binds messenger RNAs (mRNAs) and translates the encoded message by selecting cognate aminoacyl-transfer RNA (tRNA) molecules. The large subunit (LSU) contains the ribosomal catalytic site termed the peptidyl transferase center (PTC), which catalyzes the formation of peptide bonds, thereby polymerizing the amino acids delivered by tRNAs into a polypeptide chain. The nascent polypeptides leave the ribosome through a tunnel in the LSU and interact with protein factors that function in enzymatic processing, targeting, and the membrane insertion of nascent chains at the exit of the ribosomal tunnel. The sequence is that of Large ribosomal subunit protein uL6A from Saccharomyces cerevisiae (strain ATCC 204508 / S288c) (Baker's yeast).